A 410-amino-acid polypeptide reads, in one-letter code: Structure-specific endonuclease subunit SLX1 homolog (410 aa).

Residues 6–89 (QLHYCYFLLS…NICKVTRDNI (84 aa)) enclose the GIY-YIG domain.

The protein belongs to the SLX1 family. Forms a heterodimer with a member of the SLX4 family. A divalent metal cation is required as a cofactor.

It is found in the nucleus. In terms of biological role, catalytic subunit of a heterodimeric structure-specific endonuclease that resolves DNA secondary structures generated during DNA repair and recombination. Has endonuclease activity towards branched DNA substrates, introducing single-strand cuts in duplex DNA close to junctions with ss-DNA. In Cryptosporidium parvum (strain Iowa II), this protein is Structure-specific endonuclease subunit SLX1 homolog.